Reading from the N-terminus, the 388-residue chain is Queuine tRNA-ribosyltransferase (388 aa).

The Proton acceptor role is filled by aspartate 91. Substrate contacts are provided by residues 91-95, aspartate 145, glutamine 190, and glycine 217; that span reads DSGGY. Positions 248–254 are RNA binding; it reads GVGAPED. The Nucleophile role is filled by aspartate 267. Positions 272–276 are RNA binding; important for wobble base 34 recognition; that stretch reads TRLAR. Residues cysteine 305, cysteine 307, cysteine 310, and histidine 336 each contribute to the Zn(2+) site.

This sequence belongs to the queuine tRNA-ribosyltransferase family. Homodimer. Within each dimer, one monomer is responsible for RNA recognition and catalysis, while the other monomer binds to the replacement base PreQ1. Requires Zn(2+) as cofactor.

The catalysed reaction is 7-aminomethyl-7-carbaguanine + guanosine(34) in tRNA = 7-aminomethyl-7-carbaguanosine(34) in tRNA + guanine. It participates in tRNA modification; tRNA-queuosine biosynthesis. Functionally, catalyzes the base-exchange of a guanine (G) residue with the queuine precursor 7-aminomethyl-7-deazaguanine (PreQ1) at position 34 (anticodon wobble position) in tRNAs with GU(N) anticodons (tRNA-Asp, -Asn, -His and -Tyr). Catalysis occurs through a double-displacement mechanism. The nucleophile active site attacks the C1' of nucleotide 34 to detach the guanine base from the RNA, forming a covalent enzyme-RNA intermediate. The proton acceptor active site deprotonates the incoming PreQ1, allowing a nucleophilic attack on the C1' of the ribose to form the product. After dissociation, two additional enzymatic reactions on the tRNA convert PreQ1 to queuine (Q), resulting in the hypermodified nucleoside queuosine (7-(((4,5-cis-dihydroxy-2-cyclopenten-1-yl)amino)methyl)-7-deazaguanosine). This Dictyoglomus turgidum (strain DSM 6724 / Z-1310) protein is Queuine tRNA-ribosyltransferase.